The chain runs to 203 residues: Somatotropin (203 aa).

Positions 1–17 (MNRVILLLSVMCVGVSS) are cleaved as a signal peptide. Gln18 is modified (pyrrolidone carboxylic acid). Intrachain disulfides connect Cys68–Cys176 and Cys193–Cys201.

It belongs to the somatotropin/prolactin family.

The protein localises to the secreted. Functionally, growth hormone plays an important role in growth control and is involved in the regulation of several anabolic processes. Implicated as an osmoregulatory substance important for seawater adaptation. This Verasper variegatus (Spotted flounder) protein is Somatotropin (gh).